The sequence spans 162 residues: D-aminoacyl-tRNA deacylase (162 aa).

A Gly-cisPro motif, important for rejection of L-amino acids motif is present at residues 145-146 (GP).

The protein belongs to the DTD family. In terms of assembly, homodimer.

It localises to the cytoplasm. It carries out the reaction glycyl-tRNA(Ala) + H2O = tRNA(Ala) + glycine + H(+). It catalyses the reaction a D-aminoacyl-tRNA + H2O = a tRNA + a D-alpha-amino acid + H(+). Functionally, an aminoacyl-tRNA editing enzyme that deacylates mischarged D-aminoacyl-tRNAs. Also deacylates mischarged glycyl-tRNA(Ala), protecting cells against glycine mischarging by AlaRS. Acts via tRNA-based rather than protein-based catalysis; rejects L-amino acids rather than detecting D-amino acids in the active site. By recycling D-aminoacyl-tRNA to D-amino acids and free tRNA molecules, this enzyme counteracts the toxicity associated with the formation of D-aminoacyl-tRNA entities in vivo and helps enforce protein L-homochirality. This chain is D-aminoacyl-tRNA deacylase, found in Bifidobacterium longum (strain NCC 2705).